The primary structure comprises 289 residues: Eukaryotic translation initiation factor 3 subunit G (289 aa).

Residues 1-33 form a disordered region; the sequence is MSRPTKADWADDEEFDDPSALPPQQITTNKDGT. Residues 209–287 form the RRM domain; the sequence is ATLRVTNVSE…LILRVEFAKR (79 aa).

It belongs to the eIF-3 subunit G family. In terms of assembly, component of the eukaryotic translation initiation factor 3 (eIF-3) complex.

It localises to the cytoplasm. Functionally, RNA-binding component of the eukaryotic translation initiation factor 3 (eIF-3) complex, which is involved in protein synthesis of a specialized repertoire of mRNAs and, together with other initiation factors, stimulates binding of mRNA and methionyl-tRNAi to the 40S ribosome. The eIF-3 complex specifically targets and initiates translation of a subset of mRNAs involved in cell proliferation. This subunit can bind 18S rRNA. This is Eukaryotic translation initiation factor 3 subunit G (tif35) from Emericella nidulans (strain FGSC A4 / ATCC 38163 / CBS 112.46 / NRRL 194 / M139) (Aspergillus nidulans).